Here is a 158-residue protein sequence, read N- to C-terminus: 2-C-methyl-D-erythritol 2,4-cyclodiphosphate synthase (158 aa).

Positions 9 and 11 each coordinate a divalent metal cation. 4-CDP-2-C-methyl-D-erythritol 2-phosphate-binding positions include 9–11 and 35–36; these read DVH and HS. H43 lines the a divalent metal cation pocket. Residues 57–59, 62–66, 101–107, 133–136, F140, and R143 each bind 4-CDP-2-C-methyl-D-erythritol 2-phosphate; these read DIG, FPDTD, AQAPKMA, and TTTE.

The protein belongs to the IspF family. As to quaternary structure, homotrimer. Requires a divalent metal cation as cofactor.

It catalyses the reaction 4-CDP-2-C-methyl-D-erythritol 2-phosphate = 2-C-methyl-D-erythritol 2,4-cyclic diphosphate + CMP. It participates in isoprenoid biosynthesis; isopentenyl diphosphate biosynthesis via DXP pathway; isopentenyl diphosphate from 1-deoxy-D-xylulose 5-phosphate: step 4/6. Its function is as follows. Involved in the biosynthesis of isopentenyl diphosphate (IPP) and dimethylallyl diphosphate (DMAPP), two major building blocks of isoprenoid compounds. Catalyzes the conversion of 4-diphosphocytidyl-2-C-methyl-D-erythritol 2-phosphate (CDP-ME2P) to 2-C-methyl-D-erythritol 2,4-cyclodiphosphate (ME-CPP) with a corresponding release of cytidine 5-monophosphate (CMP). This Vibrio vulnificus (strain CMCP6) protein is 2-C-methyl-D-erythritol 2,4-cyclodiphosphate synthase.